The chain runs to 458 residues: 3-isopropylmalate dehydratase large subunit (458 aa).

[4Fe-4S] cluster is bound by residues C339, C399, and C402.

It belongs to the aconitase/IPM isomerase family. LeuC type 1 subfamily. In terms of assembly, heterodimer of LeuC and LeuD. The cofactor is [4Fe-4S] cluster.

It catalyses the reaction (2R,3S)-3-isopropylmalate = (2S)-2-isopropylmalate. It participates in amino-acid biosynthesis; L-leucine biosynthesis; L-leucine from 3-methyl-2-oxobutanoate: step 2/4. In terms of biological role, catalyzes the isomerization between 2-isopropylmalate and 3-isopropylmalate, via the formation of 2-isopropylmaleate. The chain is 3-isopropylmalate dehydratase large subunit from Lactococcus lactis subsp. cremoris (strain MG1363).